A 393-amino-acid chain; its full sequence is NAD(P)H-quinone oxidoreductase subunit H, chloroplastic (393 aa).

The protein belongs to the complex I 49 kDa subunit family. In terms of assembly, NDH is composed of at least 16 different subunits, 5 of which are encoded in the nucleus.

Its subcellular location is the plastid. The protein localises to the chloroplast thylakoid membrane. It carries out the reaction a plastoquinone + NADH + (n+1) H(+)(in) = a plastoquinol + NAD(+) + n H(+)(out). It catalyses the reaction a plastoquinone + NADPH + (n+1) H(+)(in) = a plastoquinol + NADP(+) + n H(+)(out). In terms of biological role, NDH shuttles electrons from NAD(P)H:plastoquinone, via FMN and iron-sulfur (Fe-S) centers, to quinones in the photosynthetic chain and possibly in a chloroplast respiratory chain. The immediate electron acceptor for the enzyme in this species is believed to be plastoquinone. Couples the redox reaction to proton translocation, and thus conserves the redox energy in a proton gradient. In Draba nemorosa (Woodland whitlowgrass), this protein is NAD(P)H-quinone oxidoreductase subunit H, chloroplastic.